The primary structure comprises 246 residues: Carboxymethylenebutenolidase homolog (246 aa).

Residues cysteine 132, aspartate 179, and histidine 212 contribute to the active site.

Belongs to the dienelactone hydrolase family.

Its subcellular location is the cytoplasm. It is found in the cytosol. In terms of biological role, cysteine hydrolase. The chain is Carboxymethylenebutenolidase homolog (cmbl) from Xenopus tropicalis (Western clawed frog).